A 441-amino-acid polypeptide reads, in one-letter code: Ribosomal protein uS12 methylthiotransferase RimO (441 aa).

An MTTase N-terminal domain is found at 8–118 (PKIGFVSLGC…VLEHVHHYVP (111 aa)). 6 residues coordinate [4Fe-4S] cluster: C17, C53, C82, C150, C154, and C157. A Radical SAM core domain is found at 136–373 (LTPRHYAYLK…MQLQQQISAE (238 aa)). The region spanning 376–441 (QEKVGREILV…DEYDLWGSRV (66 aa)) is the TRAM domain.

This sequence belongs to the methylthiotransferase family. RimO subfamily. Requires [4Fe-4S] cluster as cofactor.

It is found in the cytoplasm. The enzyme catalyses L-aspartate(89)-[ribosomal protein uS12]-hydrogen + (sulfur carrier)-SH + AH2 + 2 S-adenosyl-L-methionine = 3-methylsulfanyl-L-aspartate(89)-[ribosomal protein uS12]-hydrogen + (sulfur carrier)-H + 5'-deoxyadenosine + L-methionine + A + S-adenosyl-L-homocysteine + 2 H(+). In terms of biological role, catalyzes the methylthiolation of an aspartic acid residue of ribosomal protein uS12. The protein is Ribosomal protein uS12 methylthiotransferase RimO of Escherichia coli (strain SMS-3-5 / SECEC).